The following is a 115-amino-acid chain: MLNYFFKKQLRLSDSTSFQDVFNGSVKKKNTLEISILGRFNLLGHPRLGLSIPRKNIKHAHNRNLIKRLVRETFRLLQYKLLSMDFVVIAKKNILFLNNTRIIDMLNSLWSNYYR.

This sequence belongs to the RnpA family. In terms of assembly, consists of a catalytic RNA component (M1 or rnpB) and a protein subunit.

The catalysed reaction is Endonucleolytic cleavage of RNA, removing 5'-extranucleotides from tRNA precursor.. Functionally, RNaseP catalyzes the removal of the 5'-leader sequence from pre-tRNA to produce the mature 5'-terminus. It can also cleave other RNA substrates such as 4.5S RNA. The protein component plays an auxiliary but essential role in vivo by binding to the 5'-leader sequence and broadening the substrate specificity of the ribozyme. This is Ribonuclease P protein component from Buchnera aphidicola subsp. Acyrthosiphon pisum (strain APS) (Acyrthosiphon pisum symbiotic bacterium).